Consider the following 211-residue polypeptide: Arginine exporter protein ArgO (211 aa).

A run of 6 helical transmembrane segments spans residues 1–21, 37–57, 68–88, 111–131, 147–167, and 179–199; these read MISYYFQGFALGAAMILPLGP, LMIALLCALSDLVLISAGIFG, LLALVTWGGVAFLLWYGFGAL, IIATMLAVTWLNPHVYLDTFV, WFALGTISASFLWFFGLALLA, and AQRIINILVGVVMWLIAFQLA.

Belongs to the LysE/ArgO transporter (TC 2.A.75) family.

The protein resides in the cell inner membrane. The enzyme catalyses L-arginine(in) = L-arginine(out). In terms of biological role, involved in the export of arginine. Important to control the intracellular level of arginine and the correct balance between arginine and lysine. The polypeptide is Arginine exporter protein ArgO (Salmonella newport (strain SL254)).